The chain runs to 210 residues: Holliday junction branch migration complex subunit RuvA (210 aa).

The tract at residues 1-70 (MISYLKGNPI…DEQPILYGFA (70 aa)) is domain I. Positions 71–149 (TAAERELFRQ…QWRKLVGITL (79 aa)) are domain II. The flexible linker stretch occupies residues 150-160 (PSTSAIPSLEV). Positions 160-210 (VLEDVEMTLLALGYTNEEINKAISTLSQDNQMLKNTNSEEWIREAIAWLSQ) are domain III.

It belongs to the RuvA family. In terms of assembly, homotetramer. Forms an RuvA(8)-RuvB(12)-Holliday junction (HJ) complex. HJ DNA is sandwiched between 2 RuvA tetramers; dsDNA enters through RuvA and exits via RuvB. An RuvB hexamer assembles on each DNA strand where it exits the tetramer. Each RuvB hexamer is contacted by two RuvA subunits (via domain III) on 2 adjacent RuvB subunits; this complex drives branch migration. In the full resolvosome a probable DNA-RuvA(4)-RuvB(12)-RuvC(2) complex forms which resolves the HJ.

It is found in the cytoplasm. The RuvA-RuvB-RuvC complex processes Holliday junction (HJ) DNA during genetic recombination and DNA repair, while the RuvA-RuvB complex plays an important role in the rescue of blocked DNA replication forks via replication fork reversal (RFR). RuvA specifically binds to HJ cruciform DNA, conferring on it an open structure. The RuvB hexamer acts as an ATP-dependent pump, pulling dsDNA into and through the RuvAB complex. HJ branch migration allows RuvC to scan DNA until it finds its consensus sequence, where it cleaves and resolves the cruciform DNA. This Rippkaea orientalis (strain PCC 8801 / RF-1) (Cyanothece sp. (strain PCC 8801)) protein is Holliday junction branch migration complex subunit RuvA.